Consider the following 807-residue polypeptide: ATP-binding cassette sub-family F member 1 (807 aa).

A disordered region spans residues 1 to 227 (MPKGPKQQPP…KEKAKKAEQM (227 aa)). Residue Ser-22 is modified to Phosphoserine. Over residues 29 to 39 (KKGKKDKKTKK) the composition is skewed to basic residues. Positions 47 to 65 (VEDRQAGEEEKVLKEKEQQ) are enriched in basic and acidic residues. Over residues 73 to 85 (QKKKRDTRKGRRK) the composition is skewed to basic residues. Ser-106 carries the post-translational modification Phosphoserine. Ser-110 and Ser-141 each carry phosphoserine; by CK2. The segment covering 148–161 (EKHPPKPAKPEKNR) has biased composition (basic and acidic residues). The residue at position 167 (Ser-167) is a Phosphoserine. Positions 197 to 207 (LDDEEEQDEEE) are enriched in acidic residues. Residues 208–227 (IKEKEPPKQGKEKAKKAEQM) show a composition bias toward basic and acidic residues. In terms of domain architecture, ABC transporter 1 spans 266–510 (IKLEKFSISA…MYQQKQKELL (245 aa)). Residue 298 to 305 (GPNGKGKT) participates in ATP binding. A compositionally biased stretch (basic and acidic residues) spans 521–542 (KELKAGGKSTKQAEKQTKEALT). The disordered stretch occupies residues 521–564 (KELKAGGKSTKQAEKQTKEALTRKQQKCRRKNQDEESQEAPELL). Ser-557 carries the post-translational modification Phosphoserine. An ABC transporter 2 domain is found at 587-802 (LGLHGVTFGY…VLEALGEVMV (216 aa)). 620 to 627 (GPNGVGKS) contacts ATP.

Belongs to the ABC transporter superfamily. ABCF family. EF3 subfamily. In terms of assembly, interacts (via N-terminus) with EIF2S1; the interaction is independent of its phosphorylated status. Associates (via both ABC transporter domains) with the ribosomes. In terms of processing, phosphorylated at phosphoserine and phosphothreonine. Phosphorylation on Ser-110 and Ser-141 by CK2; inhibits association of EIF2 with ribosomes.

The protein resides in the cytoplasm. The protein localises to the nucleus. It localises to the nucleoplasm. It is found in the nucleus envelope. Required for efficient Cap- and IRES-mediated mRNA translation initiation. Not involved in the ribosome biogenesis. The chain is ATP-binding cassette sub-family F member 1 (ABCF1) from Sus scrofa (Pig).